A 583-amino-acid polypeptide reads, in one-letter code: Aspartate--tRNA ligase (583 aa).

L-aspartate is bound at residue E169. The segment at 193–196 (QLFK) is aspartate. R215 is an L-aspartate binding site. Residues 215-217 (RDE) and Q224 contribute to the ATP site. H443 is a binding site for L-aspartate. E477 is a binding site for ATP. R484 lines the L-aspartate pocket. 529-532 (GIDR) serves as a coordination point for ATP.

Belongs to the class-II aminoacyl-tRNA synthetase family. Type 1 subfamily. As to quaternary structure, homodimer.

Its subcellular location is the cytoplasm. The enzyme catalyses tRNA(Asp) + L-aspartate + ATP = L-aspartyl-tRNA(Asp) + AMP + diphosphate. Functionally, catalyzes the attachment of L-aspartate to tRNA(Asp) in a two-step reaction: L-aspartate is first activated by ATP to form Asp-AMP and then transferred to the acceptor end of tRNA(Asp). In Stenotrophomonas maltophilia (strain R551-3), this protein is Aspartate--tRNA ligase.